Here is a 336-residue protein sequence, read N- to C-terminus: Dihydroorotate dehydrogenase (quinone) (336 aa).

FMN contacts are provided by residues alanine 62–lysine 66 and threonine 86. Lysine 66 is a binding site for substrate. Asparagine 111 to phenylalanine 115 provides a ligand contact to substrate. FMN is bound by residues asparagine 139 and asparagine 172. Substrate is bound at residue asparagine 172. Serine 175 serves as the catalytic Nucleophile. Asparagine 177 lines the substrate pocket. 2 residues coordinate FMN: lysine 217 and threonine 245. Substrate is bound at residue asparagine 246 to threonine 247. FMN is bound by residues glycine 268, glycine 297, and tyrosine 318–serine 319.

This sequence belongs to the dihydroorotate dehydrogenase family. Type 2 subfamily. Monomer. It depends on FMN as a cofactor.

It is found in the cell membrane. The enzyme catalyses (S)-dihydroorotate + a quinone = orotate + a quinol. Its pathway is pyrimidine metabolism; UMP biosynthesis via de novo pathway; orotate from (S)-dihydroorotate (quinone route): step 1/1. Functionally, catalyzes the conversion of dihydroorotate to orotate with quinone as electron acceptor. The sequence is that of Dihydroorotate dehydrogenase (quinone) from Yersinia enterocolitica serotype O:8 / biotype 1B (strain NCTC 13174 / 8081).